The chain runs to 400 residues: Diphosphomevalonate decarboxylase (400 aa).

N-acetylalanine is present on A2. Residues 23-26 (YWGK) and R78 contribute to the (R)-5-diphosphomevalonate site. S96 carries the post-translational modification Phosphoserine. (R)-5-diphosphomevalonate is bound by residues 156–161 (SGSACR) and T212.

The protein belongs to the diphosphomevalonate decarboxylase family. As to quaternary structure, homodimer. In terms of tissue distribution, expressed in heart, skeletal muscle, lung, liver, brain, pancreas, kidney and placenta.

Its subcellular location is the cytoplasm. The enzyme catalyses (R)-5-diphosphomevalonate + ATP = isopentenyl diphosphate + ADP + phosphate + CO2. The protein operates within steroid biosynthesis; cholesterol biosynthesis. Its function is as follows. Catalyzes the ATP dependent decarboxylation of (R)-5-diphosphomevalonate to form isopentenyl diphosphate (IPP). Functions in the mevalonate (MVA) pathway leading to isopentenyl diphosphate (IPP), a key precursor for the biosynthesis of isoprenoids and sterol synthesis. The protein is Diphosphomevalonate decarboxylase (MVD) of Homo sapiens (Human).